Consider the following 215-residue polypeptide: Orotate phosphoribosyltransferase (215 aa).

A 5-phospho-alpha-D-ribose 1-diphosphate-binding site is contributed by lysine 26. Phenylalanine 34–phenylalanine 35 lines the orotate pocket. Residues tyrosine 72–lysine 73, arginine 99, lysine 100, lysine 103, histidine 105, and aspartate 124–alanine 132 each bind 5-phospho-alpha-D-ribose 1-diphosphate. 2 residues coordinate orotate: threonine 128 and arginine 156.

This sequence belongs to the purine/pyrimidine phosphoribosyltransferase family. PyrE subfamily. Homodimer. Mg(2+) is required as a cofactor.

The catalysed reaction is orotidine 5'-phosphate + diphosphate = orotate + 5-phospho-alpha-D-ribose 1-diphosphate. It functions in the pathway pyrimidine metabolism; UMP biosynthesis via de novo pathway; UMP from orotate: step 1/2. In terms of biological role, catalyzes the transfer of a ribosyl phosphate group from 5-phosphoribose 1-diphosphate to orotate, leading to the formation of orotidine monophosphate (OMP). In Hahella chejuensis (strain KCTC 2396), this protein is Orotate phosphoribosyltransferase.